A 371-amino-acid chain; its full sequence is Peptide chain release factor 2 (371 aa).

Q247 bears the N5-methylglutamine mark.

It belongs to the prokaryotic/mitochondrial release factor family. In terms of processing, methylated by PrmC. Methylation increases the termination efficiency of RF2.

The protein localises to the cytoplasm. In terms of biological role, peptide chain release factor 2 directs the termination of translation in response to the peptide chain termination codons UGA and UAA. This is Peptide chain release factor 2 from Caulobacter vibrioides (strain ATCC 19089 / CIP 103742 / CB 15) (Caulobacter crescentus).